The chain runs to 132 residues: Large ribosomal subunit protein bL17 (132 aa).

Belongs to the bacterial ribosomal protein bL17 family. In terms of assembly, part of the 50S ribosomal subunit. Contacts protein L32.

This Saccharophagus degradans (strain 2-40 / ATCC 43961 / DSM 17024) protein is Large ribosomal subunit protein bL17.